The chain runs to 199 residues: dITP/XTP pyrophosphatase (199 aa).

8–13 (TSNKNK) contacts substrate. Glu40 and Asp68 together coordinate Mg(2+). The Proton acceptor role is filled by Asp68. Substrate-binding positions include Ser69, 154-157 (FGYD), Lys177, and 182-183 (HR).

It belongs to the HAM1 NTPase family. As to quaternary structure, homodimer. Requires Mg(2+) as cofactor.

It catalyses the reaction XTP + H2O = XMP + diphosphate + H(+). It carries out the reaction dITP + H2O = dIMP + diphosphate + H(+). The enzyme catalyses ITP + H2O = IMP + diphosphate + H(+). Functionally, pyrophosphatase that catalyzes the hydrolysis of nucleoside triphosphates to their monophosphate derivatives, with a high preference for the non-canonical purine nucleotides XTP (xanthosine triphosphate), dITP (deoxyinosine triphosphate) and ITP. Seems to function as a house-cleaning enzyme that removes non-canonical purine nucleotides from the nucleotide pool, thus preventing their incorporation into DNA/RNA and avoiding chromosomal lesions. This is dITP/XTP pyrophosphatase from Wigglesworthia glossinidia brevipalpis.